Here is a 523-residue protein sequence, read N- to C-terminus: Polypyrimidine tract-binding protein 3 (523 aa).

The interval 1 to 25 is disordered; sequence MNNSTSAGVYANGNDNKKFKGDRPP. RRM domains are found at residues 30–114, 153–229, and 329–403; these read RVLH…NLPN, LRII…FSKL, and SVLL…LSKH. Lys-36 participates in a covalent cross-link: Glycyl lysine isopeptide (Lys-Gly) (interchain with G-Cter in SUMO2). Position 98 is a phosphotyrosine (Tyr-98). At Thr-109 the chain carries Phosphothreonine. Lys-187 participates in a covalent cross-link: Glycyl lysine isopeptide (Lys-Gly) (interchain with G-Cter in SUMO2). Position 394 is an N6-acetyllysine (Lys-394). Positions 406-426 are disordered; sequence VQLPREGQEDQGLTKDFSNSP. Ser-425 is modified (phosphoserine). The RRM 4 domain maps to 446-521; it reads ATLHLSNIPP…HHLRVSFSKS (76 aa).

As to quaternary structure, interacts with THBS4 (via the acidic amphipathic C-terminus). In terms of tissue distribution, detected specifically in spleen, thymus, lungs, and bone marrow.

Its function is as follows. RNA-binding protein that mediates pre-mRNA alternative splicing regulation. Plays a role in the regulation of cell proliferation, differentiation and migration. Positive regulator of EPO-dependent erythropoiesis. Participates in cell differentiation regulation by repressing tissue-specific exons. Promotes Fas exon 6 skipping. Binds RNA, preferentially to both poly(G) and poly(U). The protein is Polypyrimidine tract-binding protein 3 (Ptbp3) of Rattus norvegicus (Rat).